We begin with the raw amino-acid sequence, 481 residues long: Thyroid receptor-interacting protein 6 (481 aa).

A compositionally biased stretch (pro residues) spans Met-1–Pro-12. Residues Met-1–Glu-259 form a disordered region. The residue at position 25 (Arg-25) is an Asymmetric dimethylarginine; alternate. Arg-25 carries the post-translational modification Omega-N-methylarginine; alternate. The residue at position 55 (Tyr-55) is a Phosphotyrosine; by SRC. The residue at position 92 (Ser-92) is a Phosphoserine. The segment covering Asp-108–Ala-122 has biased composition (basic and acidic residues). Arg-111 carries the post-translational modification Omega-N-methylarginine. Low complexity-rich tracts occupy residues Ser-153–Ala-173 and Pro-183–Gly-193. Residues Arg-185 and Arg-192 each carry the omega-N-methylarginine modification. Ser-195 carries the post-translational modification Phosphoserine. Position 211 is an omega-N-methylarginine (Arg-211). Basic and acidic residues predominate over residues Ser-221–Ala-233. At Arg-243 the chain carries Omega-N-methylarginine. Ser-254 carries the phosphoserine modification. 3 LIM zinc-binding domains span residues Cys-284–Gly-321, Cys-344–Arg-403, and Cys-404–Glu-472. The interaction with MAGI1 and PTPN13 stretch occupies residues Ser-474–Cys-481.

Belongs to the zyxin/ajuba family. Specifically interacts with the ligand binding domain of the thyroid receptor (TR) in the presence of thyroid hormone. Interacts (via the third LIM domain and C-terminus) with PTPN13 (via the second PDZ domain). Interacts (via the second LIM domain or via the third LIM domain plus C-terminus) with PDLIM4 (via PDZ domain). Found in a complex with PTPN13 and PDLIM4. Interacts with SVIL isoform 2. Interacts with LPAR2 but not other LPA receptors. Interacts with PRKAA2. Interacts with MAGI1. Interacts with SCRIB. In terms of processing, phosphorylation at Tyr-55 by SRC is required for enhancement of lysophosphatidic acid-induced cell migration. Tyr-55 is dephosphorylated by PTPN13.

It is found in the cytoplasm. The protein resides in the cytoskeleton. It localises to the cell junction. The protein localises to the focal adhesion. Its subcellular location is the nucleus. Relays signals from the cell surface to the nucleus to weaken adherens junction and promote actin cytoskeleton reorganization and cell invasiveness. Involved in lysophosphatidic acid-induced cell adhesion and migration. Acts as a transcriptional coactivator for NF-kappa-B and JUN, and mediates the transrepression of these transcription factors induced by glucocorticoid receptor. This is Thyroid receptor-interacting protein 6 (TRIP6) from Bos taurus (Bovine).